A 232-amino-acid chain; its full sequence is Large ribosomal subunit protein uL1 (232 aa).

Belongs to the universal ribosomal protein uL1 family. As to quaternary structure, part of the 50S ribosomal subunit.

Functionally, binds directly to 23S rRNA. The L1 stalk is quite mobile in the ribosome, and is involved in E site tRNA release. In terms of biological role, protein L1 is also a translational repressor protein, it controls the translation of the L11 operon by binding to its mRNA. In Azobacteroides pseudotrichonymphae genomovar. CFP2, this protein is Large ribosomal subunit protein uL1.